The sequence spans 198 residues: Ribonuclease HII (198 aa).

The region spanning 5-195 (LRVAGVDEAG…VKAWLASHQG (191 aa)) is the RNase H type-2 domain. 3 residues coordinate a divalent metal cation: Asp-11, Glu-12, and Asp-103.

The protein belongs to the RNase HII family. Requires Mn(2+) as cofactor. Mg(2+) is required as a cofactor.

It is found in the cytoplasm. The enzyme catalyses Endonucleolytic cleavage to 5'-phosphomonoester.. Endonuclease that specifically degrades the RNA of RNA-DNA hybrids. The sequence is that of Ribonuclease HII from Chromobacterium violaceum (strain ATCC 12472 / DSM 30191 / JCM 1249 / CCUG 213 / NBRC 12614 / NCIMB 9131 / NCTC 9757 / MK).